Consider the following 114-residue polypeptide: Small ribosomal subunit protein uS13m (114 aa).

Positions Asp92–Lys114 are disordered.

The protein belongs to the universal ribosomal protein uS13 family. In terms of assembly, part of the small ribosomal subunit.

It is found in the mitochondrion. Its function is as follows. Located at the top of the head of the small subunit, it contacts several helices of the 18S rRNA. The polypeptide is Small ribosomal subunit protein uS13m (RPS13) (Oenothera berteroana (Bertero's evening primrose)).